Here is a 248-residue protein sequence, read N- to C-terminus: Adenosylcobinamide-GDP ribazoletransferase (248 aa).

6 helical membrane passes run 36–56 (FFLP…YLGL), 59–79 (FLPA…ITGG), 114–134 (GTIA…SLVL), 137–157 (YSIA…FLCL), 170–190 (IFIG…VLVL), and 199–219 (ATII…LLCL).

Belongs to the CobS family. Mg(2+) serves as cofactor.

It is found in the cell membrane. The catalysed reaction is alpha-ribazole + adenosylcob(III)inamide-GDP = adenosylcob(III)alamin + GMP + H(+). The enzyme catalyses alpha-ribazole 5'-phosphate + adenosylcob(III)inamide-GDP = adenosylcob(III)alamin 5'-phosphate + GMP + H(+). The protein operates within cofactor biosynthesis; adenosylcobalamin biosynthesis; adenosylcobalamin from cob(II)yrinate a,c-diamide: step 7/7. In terms of biological role, joins adenosylcobinamide-GDP and alpha-ribazole to generate adenosylcobalamin (Ado-cobalamin). Also synthesizes adenosylcobalamin 5'-phosphate from adenosylcobinamide-GDP and alpha-ribazole 5'-phosphate. This chain is Adenosylcobinamide-GDP ribazoletransferase, found in Clostridium botulinum (strain Langeland / NCTC 10281 / Type F).